The chain runs to 255 residues: Small ribosomal subunit protein eS1 (255 aa).

A compositionally biased stretch (basic residues) spans 1 to 18 (MAVGKNKRLSKGKKGLKK). Residues 1–28 (MAVGKNKRLSKGKKGLKKRTQDPFSRKD) form a disordered region. Ala-2 carries the N-acetylalanine; partial modification. Positions 19–28 (RTQDPFSRKD) are enriched in basic and acidic residues.

The protein belongs to the eukaryotic ribosomal protein eS1 family. In terms of assembly, component of the small ribosomal subunit. Mature ribosomes consist of a small (40S) and a large (60S) subunit. The 40S subunit contains about 33 different proteins and 1 molecule of RNA (18S). The 60S subunit contains about 49 different proteins and 3 molecules of RNA (25S, 5.8S and 5S).

It is found in the cytoplasm. The chain is Small ribosomal subunit protein eS1 from Ajellomyces capsulatus (strain G186AR / H82 / ATCC MYA-2454 / RMSCC 2432) (Darling's disease fungus).